The chain runs to 301 residues: Diaminopimelate epimerase (301 aa).

Residues Asn15, Gln47, and Asn67 each contribute to the substrate site. Cys76 functions as the Proton donor in the catalytic mechanism. Residues Gly77–Asn78, Asn163, Asn197, and Glu215–Arg216 each bind substrate. Cys224 functions as the Proton acceptor in the catalytic mechanism. A substrate-binding site is contributed by Gly225 to Ser226.

It belongs to the diaminopimelate epimerase family. In terms of assembly, homodimer.

The protein resides in the cytoplasm. It catalyses the reaction (2S,6S)-2,6-diaminopimelate = meso-2,6-diaminopimelate. The protein operates within amino-acid biosynthesis; L-lysine biosynthesis via DAP pathway; DL-2,6-diaminopimelate from LL-2,6-diaminopimelate: step 1/1. Catalyzes the stereoinversion of LL-2,6-diaminopimelate (L,L-DAP) to meso-diaminopimelate (meso-DAP), a precursor of L-lysine and an essential component of the bacterial peptidoglycan. The chain is Diaminopimelate epimerase from Rhizobium etli (strain ATCC 51251 / DSM 11541 / JCM 21823 / NBRC 15573 / CFN 42).